Here is a 303-residue protein sequence, read N- to C-terminus: Elongation factor Ts (303 aa).

The interval 81-84 is involved in Mg(2+) ion dislocation from EF-Tu; it reads TDFV.

Belongs to the EF-Ts family.

It localises to the cytoplasm. Functionally, associates with the EF-Tu.GDP complex and induces the exchange of GDP to GTP. It remains bound to the aminoacyl-tRNA.EF-Tu.GTP complex up to the GTP hydrolysis stage on the ribosome. This Mesomycoplasma hyopneumoniae (strain 7448) (Mycoplasma hyopneumoniae) protein is Elongation factor Ts.